The following is a 442-amino-acid chain: D-serine dehydratase (442 aa).

The residue at position 118 (lysine 118) is an N6-(pyridoxal phosphate)lysine.

The protein belongs to the serine/threonine dehydratase family. DsdA subfamily. Monomer. Pyridoxal 5'-phosphate is required as a cofactor.

The catalysed reaction is D-serine = pyruvate + NH4(+). The chain is D-serine dehydratase from Shigella dysenteriae serotype 1 (strain Sd197).